The primary structure comprises 448 residues: Exodeoxyribonuclease 7 large subunit (448 aa).

The protein belongs to the XseA family. Heterooligomer composed of large and small subunits.

The protein localises to the cytoplasm. The enzyme catalyses Exonucleolytic cleavage in either 5'- to 3'- or 3'- to 5'-direction to yield nucleoside 5'-phosphates.. Bidirectionally degrades single-stranded DNA into large acid-insoluble oligonucleotides, which are then degraded further into small acid-soluble oligonucleotides. The chain is Exodeoxyribonuclease 7 large subunit from Shewanella sp. (strain MR-7).